Consider the following 281-residue polypeptide: Putative integrase/recombinase y4rD (281 aa).

The Core-binding (CB) domain occupies 5 to 98; it reads LLLAPLLESY…AIRSFFHHVA (94 aa). Residues 122–281 enclose the Tyr recombinase domain; it reads EVTHHLTKAE…TMSGTENASV (160 aa). Catalysis depends on residues arginine 162, lysine 188, histidine 262, and arginine 265.

Belongs to the 'phage' integrase family.

Seems to be non-functional. The sequence is that of Putative integrase/recombinase y4rD from Sinorhizobium fredii (strain NBRC 101917 / NGR234).